The following is a 249-amino-acid chain: Type III pantothenate kinase (249 aa).

Position 6–13 (6–13 (DAGNSRIK)) interacts with ATP. Substrate contacts are provided by residues Phe77 and 98 to 101 (GVDR). Catalysis depends on Asp100, which acts as the Proton acceptor. Asp121 is a binding site for K(+). Position 124 (Ser124) interacts with ATP. Thr177 is a substrate binding site.

The protein belongs to the type III pantothenate kinase family. Homodimer. It depends on NH4(+) as a cofactor. The cofactor is K(+).

It localises to the cytoplasm. The enzyme catalyses (R)-pantothenate + ATP = (R)-4'-phosphopantothenate + ADP + H(+). It functions in the pathway cofactor biosynthesis; coenzyme A biosynthesis; CoA from (R)-pantothenate: step 1/5. Catalyzes the phosphorylation of pantothenate (Pan), the first step in CoA biosynthesis. The sequence is that of Type III pantothenate kinase from Teredinibacter turnerae (strain ATCC 39867 / T7901).